A 327-amino-acid chain; its full sequence is MAGETVLVVGGAGYIGSHTCLDLANKGYRPVVFDNFSNGHREFVRWGPAEEGDIRDRARLDEVLAKHKPAAILHFAALIEVGESVKDPVSFYENNVIGTLTLLSAAQAAGINAFVFSSTCATYGLPQSVPLDETHRQVPINPYGRTKYIVEQALADYDQYGSLRSVVLRYFNAAGADFEGRIGEWHQPETHAIPLAIDAALGRRQGFKVFGSDYETRDGTCVRDYIHVLDLADAHVRAVEYLLKGGDSVALNLGTGTGTTVKELLGAIEEVSNRPFPVEYIGRREGDSHTLVANNDKARDVLGWVPQYDLSEIIRSAWDWHAKSNQH.

Thr-119 lines the substrate pocket. The active-site Proton acceptor is Tyr-143.

The protein belongs to the NAD(P)-dependent epimerase/dehydratase family. The cofactor is NAD(+).

The catalysed reaction is UDP-alpha-D-glucose = UDP-alpha-D-galactose. Its pathway is carbohydrate metabolism; galactose metabolism. It participates in glycan metabolism; exopolysaccharide biosynthesis. The sequence is that of UDP-glucose 4-epimerase (exoB) from Rhizobium leguminosarum bv. trifolii.